The following is a 264-amino-acid chain: S-adenosylmethionine decarboxylase proenzyme (264 aa).

The active-site Schiff-base intermediate with substrate; via pyruvic acid is the serine 113. Residue serine 113 is modified to Pyruvic acid (Ser); by autocatalysis. Residue histidine 118 is the Proton acceptor; for processing activity of the active site. The active-site Proton donor; for catalytic activity is the cysteine 141.

It belongs to the prokaryotic AdoMetDC family. Type 2 subfamily. As to quaternary structure, heterooctamer of four alpha and four beta chains arranged as a tetramer of alpha/beta heterodimers. Requires pyruvate as cofactor. Post-translationally, is synthesized initially as an inactive proenzyme. Formation of the active enzyme involves a self-maturation process in which the active site pyruvoyl group is generated from an internal serine residue via an autocatalytic post-translational modification. Two non-identical subunits are generated from the proenzyme in this reaction, and the pyruvate is formed at the N-terminus of the alpha chain, which is derived from the carboxyl end of the proenzyme. The post-translation cleavage follows an unusual pathway, termed non-hydrolytic serinolysis, in which the side chain hydroxyl group of the serine supplies its oxygen atom to form the C-terminus of the beta chain, while the remainder of the serine residue undergoes an oxidative deamination to produce ammonia and the pyruvoyl group blocking the N-terminus of the alpha chain.

The catalysed reaction is S-adenosyl-L-methionine + H(+) = S-adenosyl 3-(methylsulfanyl)propylamine + CO2. Its pathway is amine and polyamine biosynthesis; S-adenosylmethioninamine biosynthesis; S-adenosylmethioninamine from S-adenosyl-L-methionine: step 1/1. In terms of biological role, catalyzes the decarboxylation of S-adenosylmethionine to S-adenosylmethioninamine (dcAdoMet), the propylamine donor required for the synthesis of the polyamines spermine and spermidine from the diamine putrescine. The protein is S-adenosylmethionine decarboxylase proenzyme of Hahella chejuensis (strain KCTC 2396).